Reading from the N-terminus, the 114-residue chain is U17-barytoxin-Tl1a (114 aa).

Positions 1–20 (MKTIIVFLSLLVLATKFGDA) are cleaved as a signal peptide. The propeptide occupies 21-74 (NEGVNQEQMKEVIQNEFREDFLNEMAAMSLLQQLEAIESTLLEKEADRNSRQKR). Cystine bridges form between C75–C88, C82–C93, and C87–C108.

The protein belongs to the neurotoxin 14 (magi-1) family. 03 (ICK-30-40) subfamily. Expressed by the venom gland.

Its subcellular location is the secreted. In terms of biological role, ion channel inhibitor. This is U17-barytoxin-Tl1a from Trittame loki (Brush-footed trapdoor spider).